The sequence spans 806 residues: Mitochondrial intermediate peptidase (806 aa).

The N-terminal 29 residues, 1 to 29, are a transit peptide targeting the mitochondrion; that stretch reads MLSRHLTVLRSACRVSHDLRVPSTQAVRK. His581 contributes to the Zn(2+) binding site. Glu582 is a catalytic residue. Residues His585 and His588 each coordinate Zn(2+).

The protein belongs to the peptidase M3 family. Zn(2+) serves as cofactor.

It is found in the mitochondrion matrix. The enzyme catalyses Release of an N-terminal octapeptide as second stage of processing of some proteins imported into the mitochondrion.. Its function is as follows. Cleaves proteins, imported into the mitochondrion, to their mature size. While most mitochondrial precursor proteins are processed to the mature form in one step by mitochondrial processing peptidase (MPP), the sequential cleavage by MIP of an octapeptide after initial processing by MPP is a required step for a subgroup of nuclear-encoded precursor proteins destined for the matrix or the inner membrane. This Malassezia globosa (strain ATCC MYA-4612 / CBS 7966) (Dandruff-associated fungus) protein is Mitochondrial intermediate peptidase (OCT1).